A 538-amino-acid chain; its full sequence is Phosphoenolpyruvate carboxykinase (ATP) (538 aa).

Substrate contacts are provided by Arg64, Tyr205, and Lys211. Residues Lys211, His230, and Gly246–Thr254 each bind ATP. Lys211 and His230 together coordinate Mn(2+). Residue Asp267 coordinates Mn(2+). Residues Glu295, Arg331, Arg447 to Ile448, and Thr453 contribute to the ATP site. Arg331 serves as a coordination point for substrate.

This sequence belongs to the phosphoenolpyruvate carboxykinase (ATP) family. In terms of assembly, monomer. Requires Mn(2+) as cofactor.

It is found in the cytoplasm. It catalyses the reaction oxaloacetate + ATP = phosphoenolpyruvate + ADP + CO2. Its pathway is carbohydrate biosynthesis; gluconeogenesis. Involved in the gluconeogenesis. Catalyzes the conversion of oxaloacetate (OAA) to phosphoenolpyruvate (PEP) through direct phosphoryl transfer between the nucleoside triphosphate and OAA. This Haemophilus influenzae (strain PittGG) protein is Phosphoenolpyruvate carboxykinase (ATP).